A 120-amino-acid polypeptide reads, in one-letter code: FK506-binding protein 1B (120 aa).

Residues Met-1–Asn-26 form a disordered region. The PPIase FKBP-type domain maps to Gly-20–Lys-115.

It belongs to the FKBP-type PPIase family. FKBP1 subfamily.

It carries out the reaction [protein]-peptidylproline (omega=180) = [protein]-peptidylproline (omega=0). With respect to regulation, inhibited by both FK506 and rapamycin. In terms of biological role, PPIases accelerate the folding of proteins. It catalyzes the cis-trans isomerization of proline imidic peptide bonds in oligopeptides. The chain is FK506-binding protein 1B (fpr1B) from Aspergillus fumigatus (strain ATCC MYA-4609 / CBS 101355 / FGSC A1100 / Af293) (Neosartorya fumigata).